We begin with the raw amino-acid sequence, 270 residues long: Glutamate racemase (270 aa).

Substrate is bound by residues 13-14 (DS) and 45-46 (YG). Cys77 serves as the catalytic Proton donor/acceptor. Substrate is bound at residue 78-79 (NT). Cys185 serves as the catalytic Proton donor/acceptor. 186-187 (TH) provides a ligand contact to substrate.

The protein belongs to the aspartate/glutamate racemases family.

It carries out the reaction L-glutamate = D-glutamate. It functions in the pathway cell wall biogenesis; peptidoglycan biosynthesis. Provides the (R)-glutamate required for cell wall biosynthesis. This Vibrio parahaemolyticus serotype O3:K6 (strain RIMD 2210633) protein is Glutamate racemase.